The sequence spans 249 residues: 5'-nucleotidase SurE (249 aa).

Positions 8, 9, 39, and 91 each coordinate a divalent metal cation.

Belongs to the SurE nucleotidase family. A divalent metal cation serves as cofactor.

Its subcellular location is the cytoplasm. It carries out the reaction a ribonucleoside 5'-phosphate + H2O = a ribonucleoside + phosphate. Its function is as follows. Nucleotidase that shows phosphatase activity on nucleoside 5'-monophosphates. This chain is 5'-nucleotidase SurE, found in Haemophilus influenzae (strain 86-028NP).